The sequence spans 344 residues: Probable dual-specificity RNA methyltransferase RlmN (344 aa).

Glu92 (proton acceptor) is an active-site residue. In terms of domain architecture, Radical SAM core spans 98-325; it reads DEDRATLCVS…TTIRASRGED (228 aa). Cys105 and Cys330 are disulfide-bonded. [4Fe-4S] cluster is bound by residues Cys112, Cys116, and Cys119. Residues 157-158, Ser189, 211-213, and His287 contribute to the S-adenosyl-L-methionine site; these read GE and SLH. Cys330 acts as the S-methylcysteine intermediate in catalysis.

Belongs to the radical SAM superfamily. RlmN family. The cofactor is [4Fe-4S] cluster.

Its subcellular location is the cytoplasm. The catalysed reaction is adenosine(2503) in 23S rRNA + 2 reduced [2Fe-2S]-[ferredoxin] + 2 S-adenosyl-L-methionine = 2-methyladenosine(2503) in 23S rRNA + 5'-deoxyadenosine + L-methionine + 2 oxidized [2Fe-2S]-[ferredoxin] + S-adenosyl-L-homocysteine. It catalyses the reaction adenosine(37) in tRNA + 2 reduced [2Fe-2S]-[ferredoxin] + 2 S-adenosyl-L-methionine = 2-methyladenosine(37) in tRNA + 5'-deoxyadenosine + L-methionine + 2 oxidized [2Fe-2S]-[ferredoxin] + S-adenosyl-L-homocysteine. In terms of biological role, specifically methylates position 2 of adenine 2503 in 23S rRNA and position 2 of adenine 37 in tRNAs. The sequence is that of Probable dual-specificity RNA methyltransferase RlmN from Bacteroides fragilis (strain YCH46).